The chain runs to 347 residues: 5-formaminoimidazole-4-carboxamide-1-(beta)-D-ribofuranosyl 5'-monophosphate synthetase (347 aa).

5-amino-1-(5-phospho-beta-D-ribosyl)imidazole-4-carboxamide-binding residues include H23 and S91. Residues 112–323 (RKILLWESDQ…YSYLYWDEPM (212 aa)) form the ATP-grasp domain. Residues 142 to 196 (PDEV…VPAY) and E218 contribute to the ATP site. Position 244 (N244) interacts with 5-amino-1-(5-phospho-beta-D-ribosyl)imidazole-4-carboxamide. Positions 283 and 296 each coordinate Mg(2+).

Belongs to the phosphohexose mutase family. Mg(2+) serves as cofactor. The cofactor is Mn(2+).

The enzyme catalyses 5-amino-1-(5-phospho-beta-D-ribosyl)imidazole-4-carboxamide + formate + ATP = 5-formamido-1-(5-phospho-D-ribosyl)imidazole-4-carboxamide + ADP + phosphate. Its pathway is purine metabolism; IMP biosynthesis via de novo pathway; 5-formamido-1-(5-phospho-D-ribosyl)imidazole-4-carboxamide from 5-amino-1-(5-phospho-D-ribosyl)imidazole-4-carboxamide (formate route): step 1/1. In terms of biological role, catalyzes the ATP- and formate-dependent formylation of 5-aminoimidazole-4-carboxamide-1-beta-d-ribofuranosyl 5'-monophosphate (AICAR) to 5-formaminoimidazole-4-carboxamide-1-beta-d-ribofuranosyl 5'-monophosphate (FAICAR) in the absence of folates. The polypeptide is 5-formaminoimidazole-4-carboxamide-1-(beta)-D-ribofuranosyl 5'-monophosphate synthetase (Ignicoccus hospitalis (strain KIN4/I / DSM 18386 / JCM 14125)).